We begin with the raw amino-acid sequence, 473 residues long: H(+)/Cl(-) exchange transporter ClcA (473 aa).

The Cytoplasmic portion of the chain corresponds to 1-32 (MKTDTSTFLAQQIVRLRRRDQIRRLMQRDKTP). Residues 33–69 (LAILFMAAVVGTLTGLVGVAFEKTVSWVQNMRIGALV) traverse the membrane as a helical segment. The Periplasmic portion of the chain corresponds to 70 to 76 (QVADHAF). The helical transmembrane segment at 77 to 100 (LLWPLAFILSALLAMVGYFLVRKF) threads the bilayer. A Selectivity filter part_1 motif is present at residues 106–110 (GSGIP). A chloride-binding site is contributed by serine 107. An intramembrane region (helical) is located at residues 109–116 (IPEIEGAL). Residues 117–123 (EELRPVR) are Cytoplasmic-facing. Helical transmembrane passes span 124–141 (WWRV…TLGA) and 148–166 (EGPT…LDVF). Residues 146–150 (GREGP) carry the Selectivity filter part_2 motif. Residues 167-176 (RMRSAEARHT) are Cytoplasmic-facing. Intramembrane regions (helical) lie at residues 177–189 (LLAT…LSAA) and 193–201 (PLAGILFII). The Cytoplasmic portion of the chain corresponds to 202–214 (EEMRPQFRYNLIS). A helical transmembrane segment spans residues 215-232 (IKAVFTGVIMSSIVFRIF). The Periplasmic segment spans residues 233–252 (NGEAPIIEVGKLSDAPVNTL). Residues 253-281 (WLYLILGIIFGCVGPVFNSLVLRTQDMFQ) traverse the membrane as a helical segment. The Cytoplasmic segment spans residues 282-287 (RFHGGE). Residues 288–309 (IKKWVLMGGAIGGLCGILGLIE) form a helical membrane-spanning segment. Residues 310 to 329 (PAAAGGGFNLIPIAAAGNFS) are Periplasmic-facing. A run of 2 helical transmembrane segments spans residues 330–349 (VGLL…LCFS) and 355–376 (GIFA…MAAA). A Selectivity filter part_3 motif is present at residues 355 to 359 (GIFAP). Positions 356 and 357 each coordinate chloride. Residues 377 to 386 (VLFPQYHPEA) lie on the Periplasmic side of the membrane. Positions 387-401 (GTFAIAGMGALMAAS) form an intramembrane region, helical. Residues 402–404 (VRA) constitute an intramembrane region (note=Loop between two helices). Positions 405-416 (PLTGIVLVLEMT) form an intramembrane region, helical. The note=Loop between two helices intramembrane region spans 417–421 (DNYQL). Residues 422–438 (ILPMIITCLGATLLAQF) traverse the membrane as a helical segment. At 439-473 (LGGKPLYSTILARTLAKQDAEQAAKNQNAPAGENT) the chain is on the cytoplasmic side. Tyrosine 445 contributes to the chloride binding site.

This sequence belongs to the chloride channel (TC 2.A.49) family. ClcA subfamily. Homodimer.

The protein resides in the cell inner membrane. It carries out the reaction 2 chloride(in) + H(+)(out) = 2 chloride(out) + H(+)(in). In terms of biological role, proton-coupled chloride transporter. Functions as antiport system and exchanges two chloride ions for 1 proton. Probably acts as an electrical shunt for an outwardly-directed proton pump that is linked to amino acid decarboxylation, as part of the extreme acid resistance (XAR) response. The polypeptide is H(+)/Cl(-) exchange transporter ClcA (Salmonella paratyphi A (strain AKU_12601)).